We begin with the raw amino-acid sequence, 159 residues long: Ribosomal RNA large subunit methyltransferase H (159 aa).

S-adenosyl-L-methionine-binding positions include leucine 76, glycine 108, and 127–132 (FSKMTF).

This sequence belongs to the RNA methyltransferase RlmH family. As to quaternary structure, homodimer.

It localises to the cytoplasm. The catalysed reaction is pseudouridine(1915) in 23S rRNA + S-adenosyl-L-methionine = N(3)-methylpseudouridine(1915) in 23S rRNA + S-adenosyl-L-homocysteine + H(+). In terms of biological role, specifically methylates the pseudouridine at position 1915 (m3Psi1915) in 23S rRNA. In Clostridium botulinum (strain ATCC 19397 / Type A), this protein is Ribosomal RNA large subunit methyltransferase H.